A 313-amino-acid chain; its full sequence is Homoserine O-succinyltransferase (313 aa).

Cys142 acts as the Acyl-thioester intermediate in catalysis. Substrate-binding residues include Lys163 and Ser192. The active-site Proton acceptor is the His235. Glu237 is an active-site residue. Arg249 is a binding site for substrate.

Belongs to the MetA family.

The protein localises to the cytoplasm. It carries out the reaction L-homoserine + succinyl-CoA = O-succinyl-L-homoserine + CoA. It functions in the pathway amino-acid biosynthesis; L-methionine biosynthesis via de novo pathway; O-succinyl-L-homoserine from L-homoserine: step 1/1. Functionally, transfers a succinyl group from succinyl-CoA to L-homoserine, forming succinyl-L-homoserine. The sequence is that of Homoserine O-succinyltransferase from Shewanella sp. (strain ANA-3).